The chain runs to 483 residues: Glycogen synthase (483 aa).

K18 lines the ADP-alpha-D-glucose pocket.

It belongs to the glycosyltransferase 1 family. Bacterial/plant glycogen synthase subfamily.

It carries out the reaction [(1-&gt;4)-alpha-D-glucosyl](n) + ADP-alpha-D-glucose = [(1-&gt;4)-alpha-D-glucosyl](n+1) + ADP + H(+). The protein operates within glycan biosynthesis; glycogen biosynthesis. Its function is as follows. Synthesizes alpha-1,4-glucan chains using ADP-glucose. In Rhodopseudomonas palustris (strain ATCC BAA-98 / CGA009), this protein is Glycogen synthase.